The sequence spans 152 residues: Large ribosomal subunit protein bL9 (152 aa).

This sequence belongs to the bacterial ribosomal protein bL9 family.

Binds to the 23S rRNA. The protein is Large ribosomal subunit protein bL9 of Prochlorococcus marinus (strain MIT 9211).